A 151-amino-acid polypeptide reads, in one-letter code: Deoxyuridine 5'-triphosphate nucleotidohydrolase (151 aa).

Residues 70–72 (RSG), Asn-83, 87–89 (LID), and Met-97 each bind substrate.

This sequence belongs to the dUTPase family. Mg(2+) serves as cofactor.

The catalysed reaction is dUTP + H2O = dUMP + diphosphate + H(+). The protein operates within pyrimidine metabolism; dUMP biosynthesis; dUMP from dCTP (dUTP route): step 2/2. Functionally, this enzyme is involved in nucleotide metabolism: it produces dUMP, the immediate precursor of thymidine nucleotides and it decreases the intracellular concentration of dUTP so that uracil cannot be incorporated into DNA. This is Deoxyuridine 5'-triphosphate nucleotidohydrolase from Actinobacillus succinogenes (strain ATCC 55618 / DSM 22257 / CCUG 43843 / 130Z).